A 435-amino-acid polypeptide reads, in one-letter code: Monodictyphenone cluster transcription factor (435 aa).

Positions cysteine 23–cysteine 50 form a DNA-binding region, zn(2)-C6 fungal-type. The disordered stretch occupies residues glutamine 117 to threonine 147. Residues proline 130–threonine 147 are compositionally biased toward low complexity.

Its subcellular location is the nucleus. Transcription factor that regulates the expression of the gene cluster that mediates the biosynthesis of monodictyphenone, a prenyl xanthone derivative. This chain is Monodictyphenone cluster transcription factor, found in Emericella nidulans (strain FGSC A4 / ATCC 38163 / CBS 112.46 / NRRL 194 / M139) (Aspergillus nidulans).